Consider the following 1488-residue polypeptide: Chromosome partition protein MukB (1488 aa).

34–41 (GGNGAGKS) is an ATP binding site. 3 coiled-coil regions span residues 326 to 418 (LEAD…QYNQ), 444 to 472 (LDTF…QTAH), and 509 to 602 (RHLA…RRAP). A flexible hinge region spans residues 666-783 (PGGAEDQRLN…SLPIFGRAAR (118 aa)). Coiled coils occupy residues 835–923 (EAEI…AKLE), 977–1116 (EMLS…AKAG), and 1209–1265 (VEAI…LQSV). A disordered region spans residues 1049-1074 (ADSGAEERARQRRDELHAQLSNNRSR). The segment covering 1051-1065 (SGAEERARQRRDELH) has biased composition (basic and acidic residues).

This sequence belongs to the SMC family. MukB subfamily. Homodimerization via its hinge domain. Binds to DNA via its C-terminal region. Interacts, and probably forms a ternary complex, with MukE and MukF via its C-terminal region. The complex formation is stimulated by calcium or magnesium. Interacts with tubulin-related protein FtsZ.

Its subcellular location is the cytoplasm. The protein localises to the nucleoid. Its function is as follows. Plays a central role in chromosome condensation, segregation and cell cycle progression. Functions as a homodimer, which is essential for chromosome partition. Involved in negative DNA supercoiling in vivo, and by this means organize and compact chromosomes. May achieve or facilitate chromosome segregation by condensation DNA from both sides of a centrally located replisome during cell division. The polypeptide is Chromosome partition protein MukB (Salmonella agona (strain SL483)).